We begin with the raw amino-acid sequence, 217 residues long: Probable transaldolase (217 aa).

Catalysis depends on Lys-83, which acts as the Schiff-base intermediate with substrate.

The protein belongs to the transaldolase family. Type 3B subfamily.

It localises to the cytoplasm. The catalysed reaction is D-sedoheptulose 7-phosphate + D-glyceraldehyde 3-phosphate = D-erythrose 4-phosphate + beta-D-fructose 6-phosphate. Its pathway is carbohydrate degradation; pentose phosphate pathway; D-glyceraldehyde 3-phosphate and beta-D-fructose 6-phosphate from D-ribose 5-phosphate and D-xylulose 5-phosphate (non-oxidative stage): step 2/3. Functionally, transaldolase is important for the balance of metabolites in the pentose-phosphate pathway. The sequence is that of Probable transaldolase from Brucella abortus (strain S19).